Reading from the N-terminus, the 212-residue chain is ATP-dependent Clp protease proteolytic subunit (212 aa).

Ser113 (nucleophile) is an active-site residue. His138 is an active-site residue.

The protein belongs to the peptidase S14 family. As to quaternary structure, fourteen ClpP subunits assemble into 2 heptameric rings which stack back to back to give a disk-like structure with a central cavity, resembling the structure of eukaryotic proteasomes.

The protein resides in the cytoplasm. The catalysed reaction is Hydrolysis of proteins to small peptides in the presence of ATP and magnesium. alpha-casein is the usual test substrate. In the absence of ATP, only oligopeptides shorter than five residues are hydrolyzed (such as succinyl-Leu-Tyr-|-NHMec, and Leu-Tyr-Leu-|-Tyr-Trp, in which cleavage of the -Tyr-|-Leu- and -Tyr-|-Trp bonds also occurs).. Functionally, cleaves peptides in various proteins in a process that requires ATP hydrolysis. Has a chymotrypsin-like activity. Plays a major role in the degradation of misfolded proteins. In Saccharophagus degradans (strain 2-40 / ATCC 43961 / DSM 17024), this protein is ATP-dependent Clp protease proteolytic subunit.